The chain runs to 346 residues: GTPase Obg (346 aa).

Residues 1–159 (MKFLDSAKIY…RTVLLRLKLI (159 aa)) enclose the Obg domain. The OBG-type G domain maps to 160–327 (ADAGLVGLPN…ALRAVLAEID (168 aa)). GTP contacts are provided by residues 166–173 (GLPNAGKS), 191–195 (FTTLN), 212–215 (DIPG), 279–282 (SKVD), and 308–310 (SAA). The Mg(2+) site is built by serine 173 and threonine 193.

Belongs to the TRAFAC class OBG-HflX-like GTPase superfamily. OBG GTPase family. In terms of assembly, monomer. Mg(2+) serves as cofactor.

It is found in the cytoplasm. In terms of biological role, an essential GTPase which binds GTP, GDP and possibly (p)ppGpp with moderate affinity, with high nucleotide exchange rates and a fairly low GTP hydrolysis rate. Plays a role in control of the cell cycle, stress response, ribosome biogenesis and in those bacteria that undergo differentiation, in morphogenesis control. The protein is GTPase Obg of Methylocella silvestris (strain DSM 15510 / CIP 108128 / LMG 27833 / NCIMB 13906 / BL2).